Reading from the N-terminus, the 244-residue chain is Ubiquitin carboxyl-terminal hydrolase mug105 (244 aa).

C42 (nucleophile) is an active-site residue. H165 (proton acceptor) is an active-site residue. Residue D183 is part of the active site.

The protein belongs to the peptidase C78 family. ZUFSP subfamily.

It localises to the cytoplasm. The catalysed reaction is Thiol-dependent hydrolysis of ester, thioester, amide, peptide and isopeptide bonds formed by the C-terminal Gly of ubiquitin (a 76-residue protein attached to proteins as an intracellular targeting signal).. In terms of biological role, deubiquitinase with endodeubiquitinase activity that preferentially cleaves 'Lys-48'-linked polyubiquitin chains. Shows only weak activity against 'Lys-63' and 'Lys-11'-linked chains. Has a role in meiosis. This Schizosaccharomyces pombe (strain 972 / ATCC 24843) (Fission yeast) protein is Ubiquitin carboxyl-terminal hydrolase mug105 (mug105).